The sequence spans 507 residues: 3-octaprenyl-4-hydroxybenzoate carboxy-lyase (507 aa).

Asparagine 177 is a binding site for Mn(2+). Prenylated FMN contacts are provided by residues 180-182, 194-196, and 199-200; these read IYR, RWL, and RG. Glutamate 243 lines the Mn(2+) pocket. Catalysis depends on aspartate 302, which acts as the Proton donor.

It belongs to the UbiD family. Homohexamer. Requires prenylated FMN as cofactor. Mn(2+) serves as cofactor.

Its subcellular location is the cell membrane. It catalyses the reaction a 4-hydroxy-3-(all-trans-polyprenyl)benzoate + H(+) = a 2-(all-trans-polyprenyl)phenol + CO2. It functions in the pathway cofactor biosynthesis; ubiquinone biosynthesis. Functionally, catalyzes the decarboxylation of 3-octaprenyl-4-hydroxy benzoate to 2-octaprenylphenol, an intermediate step in ubiquinone biosynthesis. The chain is 3-octaprenyl-4-hydroxybenzoate carboxy-lyase from Cupriavidus metallidurans (strain ATCC 43123 / DSM 2839 / NBRC 102507 / CH34) (Ralstonia metallidurans).